We begin with the raw amino-acid sequence, 77 residues long: Cell division topological specificity factor (77 aa).

Belongs to the MinE family.

Its function is as follows. Prevents the cell division inhibition by proteins MinC and MinD at internal division sites while permitting inhibition at polar sites. This ensures cell division at the proper site by restricting the formation of a division septum at the midpoint of the long axis of the cell. This chain is Cell division topological specificity factor, found in Helicobacter pylori (strain HPAG1).